We begin with the raw amino-acid sequence, 153 residues long: Histone H2B.6 (153 aa).

Composition is skewed to basic and acidic residues over residues 1–28 (MAPK…EKAP) and 36–53 (EKRL…EGKK). The segment at 1-60 (MAPKAEKKPAAKKPAEEEPAAEKAEKAPAGKKPKAEKRLPAGKGEKGSGEGKKAGRKKGK) is disordered. 2 positions are modified to N6-acetyllysine: lysine 7 and lysine 37. Lysine 149 participates in a covalent cross-link: Glycyl lysine isopeptide (Lys-Gly) (interchain with G-Cter in ubiquitin).

Belongs to the histone H2B family. The nucleosome is a histone octamer containing two molecules each of H2A, H2B, H3 and H4 assembled in one H3-H4 heterotetramer and two H2A-H2B heterodimers. The octamer wraps approximately 147 bp of DNA. Can be acetylated to form H2BK6ac and H2BK33ac. In terms of processing, monoubiquitinated by BRE1 to form H2BK143ub1 and deubiquitinated by UBP26. Required for heterochromatic histone H3 di- and trimethylation at H3K4me. May give a specific tag for epigenetic transcriptional activation.

Its subcellular location is the nucleus. It is found in the chromosome. In terms of biological role, core component of nucleosome. Nucleosomes wrap and compact DNA into chromatin, limiting DNA accessibility to the cellular machineries which require DNA as a template. Histones thereby play a central role in transcription regulation, DNA repair, DNA replication and chromosomal stability. DNA accessibility is regulated via a complex set of post-translational modifications of histones, also called histone code, and nucleosome remodeling. The polypeptide is Histone H2B.6 (H2B.6) (Oryza sativa subsp. japonica (Rice)).